The sequence spans 376 residues: Carbamoyl phosphate synthase small chain (376 aa).

The interval 1-187 (MKALLVLEDG…AEDGSYAWRG (187 aa)) is CPSase. Residues Ser45, Gly239, and Gly241 each contribute to the L-glutamine site. Positions 191–376 (PLLVYDFGIK…RKIIGESAGA (186 aa)) constitute a Glutamine amidotransferase type-1 domain. The active-site Nucleophile is the Cys266. 5 residues coordinate L-glutamine: Leu267, Gln270, Asn308, Gly310, and Phe311. Active-site residues include His349 and Glu351.

The protein belongs to the CarA family. In terms of assembly, composed of two chains; the small (or glutamine) chain promotes the hydrolysis of glutamine to ammonia, which is used by the large (or ammonia) chain to synthesize carbamoyl phosphate. Tetramer of heterodimers (alpha,beta)4.

It catalyses the reaction hydrogencarbonate + L-glutamine + 2 ATP + H2O = carbamoyl phosphate + L-glutamate + 2 ADP + phosphate + 2 H(+). It carries out the reaction L-glutamine + H2O = L-glutamate + NH4(+). The protein operates within amino-acid biosynthesis; L-arginine biosynthesis; carbamoyl phosphate from bicarbonate: step 1/1. It participates in pyrimidine metabolism; UMP biosynthesis via de novo pathway; (S)-dihydroorotate from bicarbonate: step 1/3. Small subunit of the glutamine-dependent carbamoyl phosphate synthetase (CPSase). CPSase catalyzes the formation of carbamoyl phosphate from the ammonia moiety of glutamine, carbonate, and phosphate donated by ATP, constituting the first step of 2 biosynthetic pathways, one leading to arginine and/or urea and the other to pyrimidine nucleotides. The small subunit (glutamine amidotransferase) binds and cleaves glutamine to supply the large subunit with the substrate ammonia. The polypeptide is Carbamoyl phosphate synthase small chain (Desulfovibrio desulfuricans (strain ATCC 27774 / DSM 6949 / MB)).